The following is a 149-amino-acid chain: MNVFLSKYVNGVDKKSRVSVPANYRAVLGKELFNGVIAYPSIRNNCIEVCGISHIEKLRQMIETLDPYSEERDAFETMIFGEAVQLSFDGEGRIILPQSLMKHAGIEEQACFVGKGVIFEIWQPQNFEKYLNAAQKIAHEKRLTLRNAH.

SpoVT-AbrB domains are found at residues 7-54 (KYVN…GISH) and 83-126 (AVQL…QPQN).

This sequence belongs to the MraZ family. In terms of assembly, forms oligomers.

The protein resides in the cytoplasm. It is found in the nucleoid. The chain is Transcriptional regulator MraZ from Rickettsia rickettsii (strain Sheila Smith).